An 887-amino-acid chain; its full sequence is Degenerin-like protein unc-105 (887 aa).

The tract at residues 1–33 (MAEDRIKSKLRRPASIESTMSSRTKPRHKPSPM) is disordered. Residues 1-93 (MAEDRIKSKL…AATADGKWRW (93 aa)) are Cytoplasmic-facing. The chain crosses the membrane as a helical span at residues 94–114 (FWYTAFTICLLALLIQIFFLI). Residues 115–698 (SKYRQYGKTV…SVLADLGGLT (584 aa)) are Extracellular-facing. Asparagine 244, asparagine 450, asparagine 473, asparagine 581, and asparagine 599 each carry an N-linked (GlcNAc...) asparagine glycan. A helical transmembrane segment spans residues 699–719 (GLWIGASVVSLLEIVTLIVFA). The Cytoplasmic portion of the chain corresponds to 720-887 (TQAYVRKRKG…YSAPYEHRKK (168 aa)). Disordered regions lie at residues 794-815 (AIQEQSDDEEETTESSRTNGSC) and 859-887 (SNSEEEDAEDEVHREPEPFYSAPYEHRKK).

It belongs to the amiloride-sensitive sodium channel (TC 1.A.6) family. As to expression, expressed in body wall muscle.

It is found in the membrane. Functionally, ion channel which is permeable to small monovalent cations. Shown not to be H+-ion gated. May be mechanosensitive and is required for growth and muscle development. This chain is Degenerin-like protein unc-105 (unc-105), found in Caenorhabditis elegans.